The chain runs to 563 residues: Pyruvate decarboxylase (563 aa).

Positions 28 and 115 each coordinate pyruvate. Residues T390 and 413–415 (GSI) each bind thiamine diphosphate. A Mg(2+)-binding site is contributed by D444. Residues 445 to 446 (GS) and 471 to 476 (NDGYTI) contribute to the thiamine diphosphate site. Residues N471 and G473 each contribute to the Mg(2+) site. Position 477 (E477) interacts with pyruvate.

This sequence belongs to the TPP enzyme family. As to quaternary structure, homotetramer. Mg(2+) is required as a cofactor. It depends on thiamine diphosphate as a cofactor.

The catalysed reaction is a 2-oxocarboxylate + H(+) = an aldehyde + CO2. The enzyme catalyses pyruvate + H(+) = acetaldehyde + CO2. This Kluyveromyces lactis (strain ATCC 8585 / CBS 2359 / DSM 70799 / NBRC 1267 / NRRL Y-1140 / WM37) (Yeast) protein is Pyruvate decarboxylase (PDC1).